The chain runs to 308 residues: Pseudouridine-5'-phosphate glycosidase (308 aa).

E28 (proton donor) is an active-site residue. K89 and V109 together coordinate substrate. Position 141 (D141) interacts with Mn(2+). Position 143–145 (143–145 (SAD)) interacts with substrate. The active-site Nucleophile is the K162.

This sequence belongs to the pseudouridine-5'-phosphate glycosidase family. Homotrimer. Requires Mn(2+) as cofactor.

It catalyses the reaction D-ribose 5-phosphate + uracil = psi-UMP + H2O. Functionally, catalyzes the reversible cleavage of pseudouridine 5'-phosphate (PsiMP) to ribose 5-phosphate and uracil. Functions biologically in the cleavage direction, as part of a pseudouridine degradation pathway. The protein is Pseudouridine-5'-phosphate glycosidase of Brachyspira hyodysenteriae (strain ATCC 49526 / WA1).